Here is a 203-residue protein sequence, read N- to C-terminus: uncharacterized protein (203 aa).

The Fe cation site is built by His-34, Glu-97, and His-172.

Belongs to the hemerythrin family.

It is found in the mitochondrion. This is an uncharacterized protein from Schizosaccharomyces pombe (strain 972 / ATCC 24843) (Fission yeast).